The chain runs to 240 residues: Guanylate kinase (240 aa).

Residues 56-236 (GRIFVITGPS…TLNELKSILL (181 aa)) form the Guanylate kinase-like domain. 63–70 (GPSGVGKS) contributes to the ATP binding site.

It belongs to the guanylate kinase family.

It localises to the cytoplasm. It carries out the reaction GMP + ATP = GDP + ADP. Its function is as follows. Essential for recycling GMP and indirectly, cGMP. This Mycoplasma genitalium (strain ATCC 33530 / DSM 19775 / NCTC 10195 / G37) (Mycoplasmoides genitalium) protein is Guanylate kinase (gmk).